We begin with the raw amino-acid sequence, 432 residues long: Maltoporin (432 aa).

An N-terminal signal peptide occupies residues 1 to 22; it reads MKKVSVIAAAVAATLAAGSAFA.

Belongs to the porin LamB (TC 1.B.3) family. Homotrimer formed of three 18-stranded antiparallel beta-barrels, containing three independent channels.

The protein localises to the cell outer membrane. The enzyme catalyses beta-maltose(in) = beta-maltose(out). Its function is as follows. Involved in the transport of maltose and maltodextrins. The polypeptide is Maltoporin (Vibrio parahaemolyticus serotype O3:K6 (strain RIMD 2210633)).